Reading from the N-terminus, the 88-residue chain is Phosphocarrier protein HPr (88 aa).

One can recognise an HPr domain in the interval 1–88; the sequence is MEKREFNIIA…DTMKKEGLAE (88 aa). H15 acts as the Pros-phosphohistidine intermediate in catalysis. Residue S46 is modified to Phosphoserine; by HPrK/P.

Belongs to the HPr family.

It localises to the cytoplasm. Its activity is regulated as follows. Phosphorylation on Ser-46 inhibits the phosphoryl transfer from enzyme I to HPr. General (non sugar-specific) component of the phosphoenolpyruvate-dependent sugar phosphotransferase system (sugar PTS). This major carbohydrate active-transport system catalyzes the phosphorylation of incoming sugar substrates concomitantly with their translocation across the cell membrane. The phosphoryl group from phosphoenolpyruvate (PEP) is transferred to the phosphoryl carrier protein HPr by enzyme I. Phospho-HPr then transfers it to the PTS EIIA domain. Its function is as follows. P-Ser-HPr interacts with the catabolite control protein A (CcpA), forming a complex that binds to DNA at the catabolite response elements cre, operator sites preceding a large number of catabolite-regulated genes. Thus, P-Ser-HPr is a corepressor in carbon catabolite repression (CCR), a mechanism that allows bacteria to coordinate and optimize the utilization of available carbon sources. P-Ser-HPr also plays a role in inducer exclusion, in which it probably interacts with several non-PTS permeases and inhibits their transport activity. This chain is Phosphocarrier protein HPr (ptsH), found in Lacticaseibacillus casei (Lactobacillus casei).